The sequence spans 84 residues: Beta-toxin Ct16 (84 aa).

A signal peptide spans 1–19; that stretch reads MNYFILLFVATFLLLDVNC. The LCN-type CS-alpha/beta domain maps to 21–80; sequence KDGYPVDANNCKFECWKNEYCDELCKAKRAESGYCYKLKLSCWCEGLPDDEPTKTSDRCY. 4 cysteine pairs are disulfide-bonded: Cys-31–Cys-79, Cys-35–Cys-55, Cys-41–Cys-62, and Cys-45–Cys-64. Residue Thr-82 is modified to Threonine amide.

It belongs to the long (4 C-C) scorpion toxin superfamily. Sodium channel inhibitor family. Alpha subfamily. As to expression, expressed by the venom gland.

It localises to the secreted. Alpha toxins bind voltage-independently at site-3 of sodium channels (Nav) and inhibit the inactivation of the activated channels, thereby blocking neuronal transmission. Is possibly toxic to mice. In Centruroides tecomanus (Scorpion), this protein is Beta-toxin Ct16.